Reading from the N-terminus, the 95-residue chain is MTTELLSDEQIATALQDLPDWTRSGDEISRTVQAESFPAAIALVDRVAEAAERAGHHPDIDIRWRTVTFTLSTHSAGGLTGRDIDLARQIDELAR.

This sequence belongs to the pterin-4-alpha-carbinolamine dehydratase family.

The enzyme catalyses (4aS,6R)-4a-hydroxy-L-erythro-5,6,7,8-tetrahydrobiopterin = (6R)-L-erythro-6,7-dihydrobiopterin + H2O. This Nocardia farcinica (strain IFM 10152) protein is Putative pterin-4-alpha-carbinolamine dehydratase.